The chain runs to 77 residues: Cell division topological specificity factor (77 aa).

This sequence belongs to the MinE family.

In terms of biological role, prevents the cell division inhibition by proteins MinC and MinD at internal division sites while permitting inhibition at polar sites. This ensures cell division at the proper site by restricting the formation of a division septum at the midpoint of the long axis of the cell. This Helicobacter pylori (strain Shi470) protein is Cell division topological specificity factor.